The following is a 546-amino-acid chain: Probable acyl-activating enzyme 21 (546 aa).

Belongs to the ATP-dependent AMP-binding enzyme family.

In terms of biological role, may act as an acid--thiol ligase that activates carboxylic acids by forming acyl-CoAs. In Arabidopsis thaliana (Mouse-ear cress), this protein is Probable acyl-activating enzyme 21 (AEE21).